A 1180-amino-acid polypeptide reads, in one-letter code: Integrin alpha-1 (1180 aa).

The first 28 residues, 1-28 (MVPRRPASLEVTVACIWLLTVILGFCVS), serve as a signal peptide directing secretion. Over 29 to 1142 (FNVDVKNSMS…SKDGLPGRVP (1114 aa)) the chain is Extracellular. The FG-GAP 1 repeat unit spans residues 30–91 (NVDVKNSMSF…CPVGRERAMP (62 aa)). A disulfide bridge links C82 with C92. Residues N100, N105, N112, N217, N317, N341, N402, N418, and N459 are each glycosylated (N-linked (GlcNAc...) asparagine). An FG-GAP 2 repeat occupies 101-160 (TSIPNVTEIKENMTFGSTLVTNPNGGFLACGPLYAYRCGHLHYTTGICSDVSPTFQVVNS). In terms of domain architecture, VWFA spans 175-364 (IVLDGSNSIY…LGERIFALEA (190 aa)). An FG-GAP 3 repeat occupies 365–417 (TADQSAASFEMEMSQTGFSAHYSQDWVMLGAVGAYDWNGTVVMQKANQMVIPH). FG-GAP repeat units follow at residues 422–474 (QTEP…DGNI), 475–537 (NILQ…RFEY), 556–614 (SCTK…TIRE), and 618–678 (QRIP…FEPN). Ca(2+) contacts are provided by D497, D499, D501, and D505. N-linked (GlcNAc...) asparagine glycosylation is present at N531. Ca(2+)-binding residues include D579, N581, D583, D587, D641, N643, D645, and D649. A disulfide bond links C687 and C696. Residues N698, N747, and N779 are each glycosylated (N-linked (GlcNAc...) asparagine). A disulfide bridge links C702 with C755. C807 and C813 are disulfide-bonded. Residues N820, N839, N882, N907, N938, N965, N973, and N1007 are each glycosylated (N-linked (GlcNAc...) asparagine). C877 and C885 form a disulfide bridge. 2 cysteine pairs are disulfide-bonded: C1029-C1062 and C1066-C1073. 3 N-linked (GlcNAc...) asparagine glycosylation sites follow: N1084, N1103, and N1114. Residues 1143-1165 (LWVILLSAFAGLLLLMLLILALW) traverse the membrane as a helical segment. At 1166–1180 (KIGFFKRPLKKKMEK) the chain is on the cytoplasmic side. The GFFKR motif signature appears at 1168–1172 (GFFKR).

The protein belongs to the integrin alpha chain family. As to quaternary structure, heterodimer of an alpha and a beta subunit. Alpha-1 associates with beta-1. Interacts with RAB21. Interacts (via cytoplasmic domain) with PTPN2; activates PTPN2 phosphatase activity towards EGFR and negatively regulates EGF signaling.

The protein resides in the membrane. Integrin alpha-1/beta-1 is a receptor for laminin and collagen. It recognizes the proline-hydroxylated sequence G-F-P-G-E-R in collagen. Involved in anchorage-dependent, negative regulation of EGF-stimulated cell growth. This is Integrin alpha-1 (Itga1) from Rattus norvegicus (Rat).